The sequence spans 302 residues: MSIEEIRKFSNEISSKINFDYDLKKSNWFNIGGQTKVYFRPDNLPDLILFLKKFGEKEKIHILGAGSNTLISDEKFDGVVIKLGKNFSNISILPNDVIIAGSACLDKKLSDFALNNGIGGFEFLACIPGTIGGGLKMNAGCFNKEFKDVLVSIQAIDKNGQVFTIPASKVIFKYRSNDLKEDLIFLSASFKGTKKNKEEIENEVLELKKKKDKAQPTKLKTSGSTFKNPIDQTDKKVWKLIKDSVPLDISFGDAHISNKHCNFFVNKNNASFEDMNKLIEFVKISVEKKTGIVLEKEIKILK.

The FAD-binding PCMH-type domain occupies 31 to 210 (IGGQTKVYFR…ENEVLELKKK (180 aa)). The active site involves Arg175. Ser224 (proton donor) is an active-site residue. Glu297 is a catalytic residue.

The protein belongs to the MurB family. FAD is required as a cofactor.

The protein localises to the cytoplasm. It carries out the reaction UDP-N-acetyl-alpha-D-muramate + NADP(+) = UDP-N-acetyl-3-O-(1-carboxyvinyl)-alpha-D-glucosamine + NADPH + H(+). It participates in cell wall biogenesis; peptidoglycan biosynthesis. Functionally, cell wall formation. This is UDP-N-acetylenolpyruvoylglucosamine reductase from Pelagibacter ubique (strain HTCC1062).